The primary structure comprises 316 residues: Coiled-coil domain-containing protein 42 (316 aa).

Coiled-coil stretches lie at residues 43-151 (RLLE…EYSI) and 182-236 (HHDL…SDVI).

It belongs to the CFAP73 family. In terms of assembly, interacts with ODF1 and ODF2. Interacts with CCDC38. Interacts with CCDC146. Interacts with CFAP53.

The protein localises to the cytoplasm. The protein resides in the perinuclear region. Its subcellular location is the cytoskeleton. It localises to the cell projection. It is found in the cilium. The protein localises to the flagellum. The protein resides in the microtubule organizing center. Its subcellular location is the centrosome. Functionally, essential for male fertility. Required for sperm development. This chain is Coiled-coil domain-containing protein 42, found in Bos taurus (Bovine).